A 55-amino-acid polypeptide reads, in one-letter code: MNWKVLEHVPLLLYILAAKTLILCLAFAGVKMYQRRSLEGKLQAEKRKQSEKKAS.

Residues 9-29 (VPLLLYILAAKTLILCLAFAG) traverse the membrane as a helical segment. A coiled-coil region spans residues 34-54 (QRRSLEGKLQAEKRKQSEKKA).

As to expression, expressed in brain, heart, kidney, thymus, liver, stomach, muscle, lung, testis, ovary, skin and eye.

The protein resides in the membrane. In Mus musculus (Mouse), this protein is Small integral membrane protein 11.